We begin with the raw amino-acid sequence, 331 residues long: ESX-3 secretion system protein EccE3 (331 aa).

2 helical membrane passes run 11–31 and 37–57; these read GRVT…PWQS and LLGV…GLYF.

The protein belongs to the EccE family. As to quaternary structure, part of the ESX-3 / type VII secretion system (T7SS), which is composed of cytosolic and membrane components. The ESX-3 membrane complex is composed of EccB3, EccC3, EccD3 and EccE3.

Its subcellular location is the cell inner membrane. Functionally, part of the ESX-3 specialized secretion system, which is important for iron and zinc uptake or homeostasis. In Mycobacterium tuberculosis (strain CDC 1551 / Oshkosh), this protein is ESX-3 secretion system protein EccE3.